Consider the following 318-residue polypeptide: Thymidylate synthase (318 aa).

Residues Arg-25 and 180-181 (RR) each bind dUMP. Cys-200 (nucleophile) is an active-site residue. Residues 220 to 223 (RSGD), Asn-231, and 261 to 263 (HIY) each bind dUMP. Asp-223 is a (6R)-5,10-methylene-5,6,7,8-tetrahydrofolate binding site. Residue Ala-317 coordinates (6R)-5,10-methylene-5,6,7,8-tetrahydrofolate.

This sequence belongs to the thymidylate synthase family. Bacterial-type ThyA subfamily. In terms of assembly, homodimer.

It localises to the cytoplasm. The enzyme catalyses dUMP + (6R)-5,10-methylene-5,6,7,8-tetrahydrofolate = 7,8-dihydrofolate + dTMP. It participates in pyrimidine metabolism; dTTP biosynthesis. Catalyzes the reductive methylation of 2'-deoxyuridine-5'-monophosphate (dUMP) to 2'-deoxythymidine-5'-monophosphate (dTMP) while utilizing 5,10-methylenetetrahydrofolate (mTHF) as the methyl donor and reductant in the reaction, yielding dihydrofolate (DHF) as a by-product. This enzymatic reaction provides an intracellular de novo source of dTMP, an essential precursor for DNA biosynthesis. This chain is Thymidylate synthase, found in Bacillus cytotoxicus (strain DSM 22905 / CIP 110041 / 391-98 / NVH 391-98).